The chain runs to 188 residues: Elongation factor P (188 aa).

The protein belongs to the elongation factor P family.

It is found in the cytoplasm. It functions in the pathway protein biosynthesis; polypeptide chain elongation. Involved in peptide bond synthesis. Stimulates efficient translation and peptide-bond synthesis on native or reconstituted 70S ribosomes in vitro. Probably functions indirectly by altering the affinity of the ribosome for aminoacyl-tRNA, thus increasing their reactivity as acceptors for peptidyl transferase. This is Elongation factor P from Mycoplasmoides gallisepticum (strain R(low / passage 15 / clone 2)) (Mycoplasma gallisepticum).